A 955-amino-acid polypeptide reads, in one-letter code: 2-oxoglutarate dehydrogenase E1 component (955 aa).

It belongs to the alpha-ketoglutarate dehydrogenase family. As to quaternary structure, homodimer. Part of the 2-oxoglutarate dehydrogenase (OGDH) complex composed of E1 (2-oxoglutarate dehydrogenase), E2 (dihydrolipoamide succinyltransferase) and E3 (dihydrolipoamide dehydrogenase); the complex contains multiple copies of the three enzymatic components (E1, E2 and E3). It depends on thiamine diphosphate as a cofactor.

The enzyme catalyses N(6)-[(R)-lipoyl]-L-lysyl-[protein] + 2-oxoglutarate + H(+) = N(6)-[(R)-S(8)-succinyldihydrolipoyl]-L-lysyl-[protein] + CO2. In terms of biological role, E1 component of the 2-oxoglutarate dehydrogenase (OGDH) complex which catalyzes the decarboxylation of 2-oxoglutarate, the first step in the conversion of 2-oxoglutarate to succinyl-CoA and CO(2). This chain is 2-oxoglutarate dehydrogenase E1 component, found in Bacillus cereus (strain ZK / E33L).